The following is a 109-amino-acid chain: Phycoerythrin alpha-1 subunit (109 aa).

(2R,3E)-phycocyanobilin contacts are provided by valine 6, alanine 16, phenylalanine 17, proline 20, aspartate 27, alanine 28, and alanine 39.

The protein belongs to the phycoerythrin family. In terms of assembly, heterotetramer of 2 identical alpha chains and 2 identical beta chains which form 2 alpha-beta heterodimers within the heterotetramer. The two alpha-beta heterodimers are rotated to an open configuration in contrast to the closed configuration found in other cryptophyte species due to the insertion of a single amino acid, Asp-65, in a conserved region of the alpha chain. In the open form, the central chromophores are not in physical contact but are separated by a water-filled channel. In terms of processing, contains three phycocyanobilin chromophores with binding mediated by both the alpha and beta subunits.

Its subcellular location is the plastid. It localises to the chloroplast thylakoid membrane. Light-harvesting photosynthetic tetrapyrrole chromophore-protein from the phycobiliprotein complex. This is Phycoerythrin alpha-1 subunit from Hemiselmis virescens.